Consider the following 351-residue polypeptide: Uroporphyrinogen decarboxylase (351 aa).

Residues 25–29 (RQAGR), F43, D74, Y151, S206, and H325 each bind substrate.

Belongs to the uroporphyrinogen decarboxylase family. In terms of assembly, homodimer.

The protein resides in the cytoplasm. It carries out the reaction uroporphyrinogen III + 4 H(+) = coproporphyrinogen III + 4 CO2. The protein operates within porphyrin-containing compound metabolism; protoporphyrin-IX biosynthesis; coproporphyrinogen-III from 5-aminolevulinate: step 4/4. Its function is as follows. Catalyzes the decarboxylation of four acetate groups of uroporphyrinogen-III to yield coproporphyrinogen-III. The chain is Uroporphyrinogen decarboxylase from Chlorobaculum tepidum (strain ATCC 49652 / DSM 12025 / NBRC 103806 / TLS) (Chlorobium tepidum).